Consider the following 104-residue polypeptide: Large ribosomal subunit protein bL21 (104 aa).

This sequence belongs to the bacterial ribosomal protein bL21 family. In terms of assembly, part of the 50S ribosomal subunit. Contacts protein L20.

In terms of biological role, this protein binds to 23S rRNA in the presence of protein L20. The protein is Large ribosomal subunit protein bL21 of Caldanaerobacter subterraneus subsp. tengcongensis (strain DSM 15242 / JCM 11007 / NBRC 100824 / MB4) (Thermoanaerobacter tengcongensis).